Consider the following 231-residue polypeptide: 5'-methylthioadenosine/S-adenosylhomocysteine nucleosidase (231 aa).

E12 serves as the catalytic Proton acceptor. Substrate-binding positions include G78, V153, and 174–175 (ME). D198 (proton donor) is an active-site residue.

Belongs to the PNP/UDP phosphorylase family. MtnN subfamily.

It carries out the reaction S-adenosyl-L-homocysteine + H2O = S-(5-deoxy-D-ribos-5-yl)-L-homocysteine + adenine. The enzyme catalyses S-methyl-5'-thioadenosine + H2O = 5-(methylsulfanyl)-D-ribose + adenine. It catalyses the reaction 5'-deoxyadenosine + H2O = 5-deoxy-D-ribose + adenine. Its pathway is amino-acid biosynthesis; L-methionine biosynthesis via salvage pathway; S-methyl-5-thio-alpha-D-ribose 1-phosphate from S-methyl-5'-thioadenosine (hydrolase route): step 1/2. Catalyzes the irreversible cleavage of the glycosidic bond in both 5'-methylthioadenosine (MTA) and S-adenosylhomocysteine (SAH/AdoHcy) to adenine and the corresponding thioribose, 5'-methylthioribose and S-ribosylhomocysteine, respectively. Also cleaves 5'-deoxyadenosine, a toxic by-product of radical S-adenosylmethionine (SAM) enzymes, into 5-deoxyribose and adenine. In Aliivibrio salmonicida (strain LFI1238) (Vibrio salmonicida (strain LFI1238)), this protein is 5'-methylthioadenosine/S-adenosylhomocysteine nucleosidase.